A 197-amino-acid chain; its full sequence is MIKRMSGIALAALLLSGCQGLLPRGETPSQPPAPTTPAKPSVVPTPTPPVVTPVPQPPKMTSVDWQGSFAPLIDQLLSAPGVEAGSILLVDGVQNKTNGQLSMANASEVLRSALAGNPRFQMVSTAQLAQAKQSLGLAANDSLGSRSKAIGLARQVSAQYVLYTTVSGNVQAPRLAMQLMLVQSGEIIWSGKGPVAL.

Positions 1–17 (MIKRMSGIALAALLLSG) are cleaved as a signal peptide. Residue Cys18 is the site of N-palmitoyl cysteine attachment. Cys18 carries S-diacylglycerol cysteine lipidation. Residues 23-57 (PRGETPSQPPAPTTPAKPSVVPTPTPPVVTPVPQP) form a disordered region. Residues 29-57 (SQPPAPTTPAKPSVVPTPTPPVVTPVPQP) are compositionally biased toward pro residues.

It belongs to the LpoB family. In terms of assembly, interacts with PBP1b.

Its subcellular location is the cell outer membrane. In terms of biological role, regulator of peptidoglycan synthesis that is essential for the function of penicillin-binding protein 1B (PBP1b). The chain is Penicillin-binding protein activator LpoB from Edwardsiella piscicida.